The sequence spans 259 residues: DNA repair protein RecO (259 aa).

This sequence belongs to the RecO family.

Involved in DNA repair and RecF pathway recombination. This Chloroherpeton thalassium (strain ATCC 35110 / GB-78) protein is DNA repair protein RecO.